The following is a 280-amino-acid chain: Vitamin B12-binding protein (280 aa).

The N-terminal stretch at 1 to 27 is a signal peptide; sequence MMPLGLFPLPRAAVVLLISLLTLPAQA. A Fe/B12 periplasmic-binding domain is found at 30–277; the sequence is RVISLSPSTT…QMASIPTPVA (248 aa). Tyr57 lines the cyanocob(III)alamin pocket. An intrachain disulfide couples Cys190 to Cys266.

The protein belongs to the BtuF family. The complex is composed of two ATP-binding proteins (BtuD), two transmembrane proteins (BtuC) and a solute-binding protein (BtuF).

The protein localises to the periplasm. Functionally, part of the ABC transporter complex BtuCDF involved in vitamin B12 import. Binds vitamin B12 and delivers it to the periplasmic surface of BtuC. In Yersinia pseudotuberculosis serotype O:1b (strain IP 31758), this protein is Vitamin B12-binding protein.